The primary structure comprises 102 residues: Large ribosomal subunit protein eL31 (102 aa).

The protein belongs to the eukaryotic ribosomal protein eL31 family.

The protein is Large ribosomal subunit protein eL31 of Staphylothermus marinus (strain ATCC 43588 / DSM 3639 / JCM 9404 / F1).